A 91-amino-acid polypeptide reads, in one-letter code: DNA-directed RNA polymerase subunit omega (91 aa).

Residues 66–91 (QMPPPLPNFPGAANREATGAEDAAGE) are disordered.

The protein belongs to the RNA polymerase subunit omega family. The RNAP catalytic core consists of 2 alpha, 1 beta, 1 beta' and 1 omega subunit. When a sigma factor is associated with the core the holoenzyme is formed, which can initiate transcription.

It carries out the reaction RNA(n) + a ribonucleoside 5'-triphosphate = RNA(n+1) + diphosphate. Functionally, promotes RNA polymerase assembly. Latches the N- and C-terminal regions of the beta' subunit thereby facilitating its interaction with the beta and alpha subunits. The chain is DNA-directed RNA polymerase subunit omega from Acidithiobacillus ferrooxidans (strain ATCC 23270 / DSM 14882 / CIP 104768 / NCIMB 8455) (Ferrobacillus ferrooxidans (strain ATCC 23270)).